Reading from the N-terminus, the 567-residue chain is D-lactate dehydrogenase [cytochrome], mitochondrial (567 aa).

Residues 1 to 56 (MAFASKFARSKTILSFLRPCRQLHSTPKSTGDVTVLSPVKGRRRLPTCWSSSLFPL) constitute a mitochondrion transit peptide. The FAD-binding PCMH-type domain occupies 142–319 (AVNIPDVVVF…TEITLRLQKI (178 aa)).

This sequence belongs to the FAD-binding oxidoreductase/transferase type 4 family. As to quaternary structure, homodimer. It depends on FAD as a cofactor. Expressed in leaves, stems, flowers and roots.

The protein localises to the mitochondrion. It carries out the reaction (R)-lactate + 2 Fe(III)-[cytochrome c] = 2 Fe(II)-[cytochrome c] + pyruvate + 2 H(+). Inhibited by cyanide ions. Catalyzes the stereospecific oxidation of D-lactate to pyruvate. Involved in the detoxification of methylglyoxal and D-lactate, but probably not involved in the metabolization of glycolate. This chain is D-lactate dehydrogenase [cytochrome], mitochondrial, found in Arabidopsis thaliana (Mouse-ear cress).